Here is a 347-residue protein sequence, read N- to C-terminus: Protein PET130 (347 aa).

It localises to the mitochondrion matrix. This chain is Protein PET130 (PET130), found in Saccharomyces cerevisiae (strain ATCC 204508 / S288c) (Baker's yeast).